Here is a 164-residue protein sequence, read N- to C-terminus: Protein-export protein SecB (164 aa).

Belongs to the SecB family. As to quaternary structure, homotetramer, a dimer of dimers. One homotetramer interacts with 1 SecA dimer.

It localises to the cytoplasm. In terms of biological role, one of the proteins required for the normal export of preproteins out of the cell cytoplasm. It is a molecular chaperone that binds to a subset of precursor proteins, maintaining them in a translocation-competent state. It also specifically binds to its receptor SecA. The protein is Protein-export protein SecB of Burkholderia orbicola (strain MC0-3).